We begin with the raw amino-acid sequence, 586 residues long: Phosphomethylpyrimidine synthase (586 aa).

Disordered stretches follow at residues 38–59 (IELS…TSGP) and 92–114 (GREI…VFPQ). Residues 92–102 (GREIKPEDDGV) are compositionally biased toward basic and acidic residues. Substrate contacts are provided by residues Asn-193, Met-222, Tyr-251, His-287, 307 to 309 (SRG), 348 to 351 (DGLR), and Glu-387. His-391 provides a ligand contact to Zn(2+). Tyr-414 lines the substrate pocket. His-455 is a binding site for Zn(2+). The [4Fe-4S] cluster site is built by Cys-535, Cys-538, and Cys-543.

The protein belongs to the ThiC family. The cofactor is [4Fe-4S] cluster.

The catalysed reaction is 5-amino-1-(5-phospho-beta-D-ribosyl)imidazole + S-adenosyl-L-methionine = 4-amino-2-methyl-5-(phosphooxymethyl)pyrimidine + CO + 5'-deoxyadenosine + formate + L-methionine + 3 H(+). It functions in the pathway cofactor biosynthesis; thiamine diphosphate biosynthesis. Catalyzes the synthesis of the hydroxymethylpyrimidine phosphate (HMP-P) moiety of thiamine from aminoimidazole ribotide (AIR) in a radical S-adenosyl-L-methionine (SAM)-dependent reaction. In Bacillus cytotoxicus (strain DSM 22905 / CIP 110041 / 391-98 / NVH 391-98), this protein is Phosphomethylpyrimidine synthase.